A 548-amino-acid polypeptide reads, in one-letter code: DNA-binding protein REPIN1 (548 aa).

A disordered region spans residues 1 to 47; that stretch reads MLERRCRGPTAMGPAHPWLFSGPSQESSQPNRGLRYQGKSVAQPGGP. Polar residues predominate over residues 22 to 31; that stretch reads GPSQESSQPN. Ser27 carries the phosphoserine modification. The residue at position 39 (Lys39) is an N6-acetyllysine. Residues 53–75 form a C2H2-type 1; atypical zinc finger; the sequence is HRCAHCRKRFPGWVALWLHTRRC. 2 consecutive C2H2-type zinc fingers follow at residues 81 to 103 and 112 to 134; these read LPCH…LQVH and FICH…LRAH. The C2H2-type 4; atypical zinc finger occupies 141–163; that stretch reads ITCPECNKRFWRQKQLRAHLRRC. C2H2-type zinc fingers lie at residues 173-195, 232-254, 260-282, 288-310, 356-378, 384-406, 412-434, 440-462, 468-490, 496-518, and 524-546; these read FICG…KRVH, FQCA…RRVH, HQCP…RRIH, YPCT…SKIH, HSCT…QRQH, FTCT…SRVH, FACE…RRDH, FVCP…RRIH, YVCP…RRIH, YACP…RKSH, and FCCA…QKKH. N6-acetyllysine is present on Lys272.

Homodimers and homomultimers. Found in a complex with RIP60 and RIP100. Expressed in the liver and in subcutaneous and visceral adipose tissue.

It localises to the nucleus. The protein localises to the cytoplasm. It is found in the cytosol. Functionally, sequence-specific double-stranded DNA-binding protein. Binds ATT-rich and T-rich DNA sequences and facilitates DNA bending. May regulate the expression of genes involved in cellular fatty acid import, including SCARB1/CD36, and genes involved in lipid droplet formation. May regulate the expression of LCN2, and thereby influence iron metabolism and apoptosis-related pathways. May regulate the expression of genes involved in glucose transport. The polypeptide is DNA-binding protein REPIN1 (Repin1) (Rattus norvegicus (Rat)).